The following is a 474-amino-acid chain: Probable glycine dehydrogenase (decarboxylating) subunit 2 (474 aa).

N6-(pyridoxal phosphate)lysine is present on lysine 262.

It belongs to the GcvP family. C-terminal subunit subfamily. In terms of assembly, the glycine cleavage system is composed of four proteins: P, T, L and H. In this organism, the P 'protein' is a heterodimer of two subunits. Pyridoxal 5'-phosphate serves as cofactor.

It carries out the reaction N(6)-[(R)-lipoyl]-L-lysyl-[glycine-cleavage complex H protein] + glycine + H(+) = N(6)-[(R)-S(8)-aminomethyldihydrolipoyl]-L-lysyl-[glycine-cleavage complex H protein] + CO2. In terms of biological role, the glycine cleavage system catalyzes the degradation of glycine. The P protein binds the alpha-amino group of glycine through its pyridoxal phosphate cofactor; CO(2) is released and the remaining methylamine moiety is then transferred to the lipoamide cofactor of the H protein. The chain is Probable glycine dehydrogenase (decarboxylating) subunit 2 from Thermotoga maritima (strain ATCC 43589 / DSM 3109 / JCM 10099 / NBRC 100826 / MSB8).